Reading from the N-terminus, the 201-residue chain is 3-isopropylmalate dehydratase small subunit (201 aa).

Belongs to the LeuD family. LeuD type 1 subfamily. As to quaternary structure, heterodimer of LeuC and LeuD.

The enzyme catalyses (2R,3S)-3-isopropylmalate = (2S)-2-isopropylmalate. Its pathway is amino-acid biosynthesis; L-leucine biosynthesis; L-leucine from 3-methyl-2-oxobutanoate: step 2/4. Functionally, catalyzes the isomerization between 2-isopropylmalate and 3-isopropylmalate, via the formation of 2-isopropylmaleate. The protein is 3-isopropylmalate dehydratase small subunit of Rhodopseudomonas palustris (strain BisA53).